A 239-amino-acid polypeptide reads, in one-letter code: Elongation factor Ts (239 aa).

An involved in Mg(2+) ion dislocation from EF-Tu region spans residues 82–85; that stretch reads TDFV. The disordered stretch occupies residues 213–239; the sequence is AAQTKPKAEEKPAAKKATSKKKKGKKK. Positions 229-239 are enriched in basic residues; the sequence is ATSKKKKGKKK.

This sequence belongs to the EF-Ts family.

The protein localises to the cytoplasm. Functionally, associates with the EF-Tu.GDP complex and induces the exchange of GDP to GTP. It remains bound to the aminoacyl-tRNA.EF-Tu.GTP complex up to the GTP hydrolysis stage on the ribosome. The sequence is that of Elongation factor Ts from Acaryochloris marina (strain MBIC 11017).